We begin with the raw amino-acid sequence, 78 residues long: ATP synthase subunit a (78 aa).

Residues 34 to 54 traverse the membrane as a helical segment; sequence LTNIGLYLTIGIFLILTYSLL.

It belongs to the ATPase A chain family. In terms of assembly, F-type ATPases have 2 components, CF(1) - the catalytic core - and CF(0) - the membrane proton channel. CF(1) has five subunits: alpha(3), beta(3), gamma(1), delta(1), epsilon(1). CF(0) has three main subunits: a, b and c.

The protein localises to the mitochondrion inner membrane. In terms of biological role, mitochondrial membrane ATP synthase (F(1)F(0) ATP synthase or Complex V) produces ATP from ADP in the presence of a proton gradient across the membrane which is generated by electron transport complexes of the respiratory chain. F-type ATPases consist of two structural domains, F(1) - containing the extramembraneous catalytic core and F(0) - containing the membrane proton channel, linked together by a central stalk and a peripheral stalk. During catalysis, ATP synthesis in the catalytic domain of F(1) is coupled via a rotary mechanism of the central stalk subunits to proton translocation. Key component of the proton channel; it may play a direct role in the translocation of protons across the membrane. The polypeptide is ATP synthase subunit a (atp6) (Aspergillus amstelodami).